A 227-amino-acid polypeptide reads, in one-letter code: ATP-dependent dethiobiotin synthetase BioD (227 aa).

13-18 contributes to the ATP binding site; it reads DIGKTY. Thr-17 provides a ligand contact to Mg(2+). The active site involves Lys-38. A substrate-binding site is contributed by Ser-42. ATP-binding positions include Asp-55, 116–119, and 179–180; these read EGSG and NN. Mg(2+)-binding residues include Asp-55 and Glu-116.

It belongs to the dethiobiotin synthetase family. Homodimer. It depends on Mg(2+) as a cofactor.

The protein localises to the cytoplasm. It catalyses the reaction (7R,8S)-7,8-diammoniononanoate + CO2 + ATP = (4R,5S)-dethiobiotin + ADP + phosphate + 3 H(+). The protein operates within cofactor biosynthesis; biotin biosynthesis; biotin from 7,8-diaminononanoate: step 1/2. Catalyzes a mechanistically unusual reaction, the ATP-dependent insertion of CO2 between the N7 and N8 nitrogen atoms of 7,8-diaminopelargonic acid (DAPA, also called 7,8-diammoniononanoate) to form a ureido ring. The chain is ATP-dependent dethiobiotin synthetase BioD from Clostridium botulinum (strain 657 / Type Ba4).